A 378-amino-acid polypeptide reads, in one-letter code: Ferrochelatase (378 aa).

Fe cation contacts are provided by His-214 and Glu-295.

The protein belongs to the ferrochelatase family.

The protein localises to the cytoplasm. It carries out the reaction heme b + 2 H(+) = protoporphyrin IX + Fe(2+). Its pathway is porphyrin-containing compound metabolism; protoheme biosynthesis; protoheme from protoporphyrin-IX: step 1/1. Catalyzes the ferrous insertion into protoporphyrin IX. This Hydrogenovibrio crunogenus (strain DSM 25203 / XCL-2) (Thiomicrospira crunogena) protein is Ferrochelatase.